We begin with the raw amino-acid sequence, 117 residues long: Immunoglobulin kappa variable 1-27 (117 aa).

Positions 1-22 (MDMRVPAQLLGLLLLWLPDTRC) are cleaved as a signal peptide. The tract at residues 23 to 45 (DIQMTQSPSSLSASVGDRVTITC) is framework-1. One can recognise an Ig-like domain in the interval 23–117 (DIQMTQSPSS…YYCQKYNSAP (95 aa)). Residues cysteine 45 and cysteine 110 are joined by a disulfide bond. The segment at 46 to 56 (RASQGISNYLA) is complementarity-determining-1. Residues 57 to 71 (WYQQKPGKVPKLLIY) are framework-2. Residues 72-78 (AASTLQS) are complementarity-determining-2. The framework-3 stretch occupies residues 79 to 110 (GVPSRFSGSGSGTDFTLTISSLQPEDVATYYC). Residues 111 to 117 (QKYNSAP) form a complementarity-determining-3 region.

In terms of assembly, immunoglobulins are composed of two identical heavy chains and two identical light chains; disulfide-linked.

Its subcellular location is the secreted. The protein localises to the cell membrane. V region of the variable domain of immunoglobulin light chains that participates in the antigen recognition. Immunoglobulins, also known as antibodies, are membrane-bound or secreted glycoproteins produced by B lymphocytes. In the recognition phase of humoral immunity, the membrane-bound immunoglobulins serve as receptors which, upon binding of a specific antigen, trigger the clonal expansion and differentiation of B lymphocytes into immunoglobulins-secreting plasma cells. Secreted immunoglobulins mediate the effector phase of humoral immunity, which results in the elimination of bound antigens. The antigen binding site is formed by the variable domain of one heavy chain, together with that of its associated light chain. Thus, each immunoglobulin has two antigen binding sites with remarkable affinity for a particular antigen. The variable domains are assembled by a process called V-(D)-J rearrangement and can then be subjected to somatic hypermutations which, after exposure to antigen and selection, allow affinity maturation for a particular antigen. The protein is Immunoglobulin kappa variable 1-27 of Homo sapiens (Human).